We begin with the raw amino-acid sequence, 302 residues long: D-alanine--D-alanine ligase (302 aa).

In terms of domain architecture, ATP-grasp spans 100–294 (KALFRREGLL…FPELVEKLIQ (195 aa)). 127–180 (GLNYPIFVKSNIGGSSVNVHLVTNYEELFIAMEALFNAGEEVLLEEAIIGQEVT) contacts ATP. 3 residues coordinate Mg(2+): Asp-248, Glu-261, and Asn-263.

The protein belongs to the D-alanine--D-alanine ligase family. Mg(2+) serves as cofactor. It depends on Mn(2+) as a cofactor.

The protein localises to the cytoplasm. It carries out the reaction 2 D-alanine + ATP = D-alanyl-D-alanine + ADP + phosphate + H(+). The protein operates within cell wall biogenesis; peptidoglycan biosynthesis. Cell wall formation. The polypeptide is D-alanine--D-alanine ligase (Lawsonia intracellularis (strain PHE/MN1-00)).